The following is a 155-amino-acid chain: uncharacterized protein (155 aa).

The tract at residues methionine 1–leucine 34 is disordered. Basic and acidic residues predominate over residues glutamine 8–valine 22. Residues methionine 115 to phenylalanine 135 form a helical membrane-spanning segment.

Its subcellular location is the membrane. This is an uncharacterized protein from Homo sapiens (Human).